The following is a 436-amino-acid chain: 3-phosphoshikimate 1-carboxyvinyltransferase (436 aa).

Lys23, Ser24, and Arg28 together coordinate 3-phosphoshikimate. Lys23 is a binding site for phosphoenolpyruvate. Residues Gly97 and Arg126 each contribute to the phosphoenolpyruvate site. 3-phosphoshikimate is bound by residues Ser171, Gln173, Asp323, and Lys350. A phosphoenolpyruvate-binding site is contributed by Gln173. Asp323 functions as the Proton acceptor in the catalytic mechanism. Phosphoenolpyruvate-binding residues include Arg354 and Arg396.

Belongs to the EPSP synthase family. Monomer.

The protein localises to the cytoplasm. It carries out the reaction 3-phosphoshikimate + phosphoenolpyruvate = 5-O-(1-carboxyvinyl)-3-phosphoshikimate + phosphate. It participates in metabolic intermediate biosynthesis; chorismate biosynthesis; chorismate from D-erythrose 4-phosphate and phosphoenolpyruvate: step 6/7. In terms of biological role, catalyzes the transfer of the enolpyruvyl moiety of phosphoenolpyruvate (PEP) to the 5-hydroxyl of shikimate-3-phosphate (S3P) to produce enolpyruvyl shikimate-3-phosphate and inorganic phosphate. The sequence is that of 3-phosphoshikimate 1-carboxyvinyltransferase from Prochlorococcus marinus (strain MIT 9301).